The primary structure comprises 161 residues: Small ribosomal subunit protein uS19 (161 aa).

The segment covering 1–19 (MARQKKYSGKGGARKKNKQ) has biased composition (basic residues). Residues 1–26 (MARQKKYSGKGGARKKNKQKQSVAPR) form a disordered region.

The protein belongs to the universal ribosomal protein uS19 family.

In terms of biological role, protein S19 forms a complex with S13 that binds strongly to the 16S ribosomal RNA. The polypeptide is Small ribosomal subunit protein uS19 (Methanococcus maripaludis (strain C6 / ATCC BAA-1332)).